Here is a 447-residue protein sequence, read N- to C-terminus: Beclin-1 (447 aa).

The span at P44–P53 shows a compositional bias: low complexity. A disordered region spans residues P44 to R71. The BH3 signature appears at T105 to S124. A coiled-coil region spans residues D139–V266. The evolutionary conserved domain (ECD) stretch occupies residues D242 to K447. Residues W422 to K447 are required for membrane-association.

The protein belongs to the beclin family. As to quaternary structure, component of the PI3K (PI3KC3/PI3K-III/class III phosphatidylinositol 3-kinase) complex. In terms of processing, may be proteolytically processed by caspases; the C-terminal fragment(s) may induce apoptosis.

It is found in the cytoplasm. Its subcellular location is the golgi apparatus. It localises to the trans-Golgi network membrane. The protein resides in the endosome membrane. The protein localises to the endoplasmic reticulum membrane. It is found in the mitochondrion membrane. Its subcellular location is the cytoplasmic vesicle. It localises to the autophagosome. Its function is as follows. Plays a central role in autophagy. Acts as core subunit of different PI3K complex forms that mediate formation of phosphatidylinositol 3-phosphate and are believed to play a role in multiple membrane trafficking pathways such as initiation of autophagosomes, maturation of autophagosomes and endocytosis. Involved in regulation of degradative endocytic trafficking and required for the abscission step in cytokinesis, probably in the context of PI3KC3-C2. The sequence is that of Beclin-1 (BECN1) from Gallus gallus (Chicken).